Reading from the N-terminus, the 142-residue chain is Deoxyuridine 5'-triphosphate nucleotidohydrolase (142 aa).

Substrate-binding positions include 62-64 (RSG), Asn-75, 79-81 (TID), and Lys-89.

It belongs to the dUTPase family. The cofactor is Mg(2+).

The enzyme catalyses dUTP + H2O = dUMP + diphosphate + H(+). It functions in the pathway pyrimidine metabolism; dUMP biosynthesis; dUMP from dCTP (dUTP route): step 2/2. In terms of biological role, this enzyme is involved in nucleotide metabolism: it produces dUMP, the immediate precursor of thymidine nucleotides and it decreases the intracellular concentration of dUTP so that uracil cannot be incorporated into DNA. The polypeptide is Deoxyuridine 5'-triphosphate nucleotidohydrolase (Nautilia profundicola (strain ATCC BAA-1463 / DSM 18972 / AmH)).